The chain runs to 161 residues: Nucleotide-binding protein Gura_0717 (161 aa).

Belongs to the YajQ family.

Nucleotide-binding protein. The chain is Nucleotide-binding protein Gura_0717 from Geotalea uraniireducens (strain Rf4) (Geobacter uraniireducens).